The chain runs to 162 residues: Ribosome maturation factor RimP (162 aa).

Belongs to the RimP family.

The protein resides in the cytoplasm. Functionally, required for maturation of 30S ribosomal subunits. The sequence is that of Ribosome maturation factor RimP from Ralstonia nicotianae (strain ATCC BAA-1114 / GMI1000) (Ralstonia solanacearum).